We begin with the raw amino-acid sequence, 190 residues long: MTPEQCEFIAGNEWIQINPQFNLDELHLICGDIGPFEAGMPIWVPLWIAVTLRKRRKCTIIPPQWLCVEELKKLVIAESGTNAFGQVPRFYLEIAHMFVQYAKEDLPDSDMIRVYVQDLWDKRSAKLNNSSTKFLGQVESCHARMDNITLMEVAYIKRSLITASREIEALNKSFHELSSQNSSDQRYVIA.

It belongs to the GINS2/PSF2 family. As to quaternary structure, component of the GINS complex which is a heterotetramer of gins1, gins2, gins3 and gins4.

The protein resides in the nucleus. In terms of biological role, the GINS complex plays an essential role in the initiation of DNA replication. The polypeptide is Probable DNA replication complex GINS protein PSF2 (Brugia malayi (Filarial nematode worm)).